Here is a 234-residue protein sequence, read N- to C-terminus: Large ribosomal subunit protein uL1 (234 aa).

This sequence belongs to the universal ribosomal protein uL1 family. As to quaternary structure, part of the 50S ribosomal subunit.

In terms of biological role, binds directly to 23S rRNA. The L1 stalk is quite mobile in the ribosome, and is involved in E site tRNA release. Its function is as follows. Protein L1 is also a translational repressor protein, it controls the translation of the L11 operon by binding to its mRNA. This Klebsiella pneumoniae subsp. pneumoniae (strain ATCC 700721 / MGH 78578) protein is Large ribosomal subunit protein uL1.